Reading from the N-terminus, the 154-residue chain is MRCPYCQSEDTQVKDSRPAEDGAAIRRRRACPVCGGRFTTFERVQLRDLVVVKRTGRKVPFDRDKLHRSFEIALRKRNVDPDRVERAVTGIVRQLESFGENEISTDDIGLLVMEALKSLDDVAYVRYASVYRNFREAKDFQDVLGELRGEPELE.

A zinc finger lies at 3–34 (CPYCQSEDTQVKDSRPAEDGAAIRRRRACPVC). An ATP-cone domain is found at 49–139 (LVVVKRTGRK…VYRNFREAKD (91 aa)).

The protein belongs to the NrdR family. The cofactor is Zn(2+).

In terms of biological role, negatively regulates transcription of bacterial ribonucleotide reductase nrd genes and operons by binding to NrdR-boxes. The protein is Transcriptional repressor NrdR of Chelativorans sp. (strain BNC1).